A 678-amino-acid polypeptide reads, in one-letter code: DNA ligase (678 aa).

Residues Asp-36 to Asp-40, Ser-85 to Leu-86, and Glu-117 contribute to the NAD(+) site. Residue Lys-119 is the N6-AMP-lysine intermediate of the active site. NAD(+)-binding residues include Arg-140, Glu-177, Lys-294, and Lys-318. Residues Cys-412, Cys-415, Cys-430, and Cys-435 each coordinate Zn(2+). The region spanning Ile-598–Glu-678 is the BRCT domain.

This sequence belongs to the NAD-dependent DNA ligase family. LigA subfamily. Mg(2+) is required as a cofactor. Requires Mn(2+) as cofactor.

The catalysed reaction is NAD(+) + (deoxyribonucleotide)n-3'-hydroxyl + 5'-phospho-(deoxyribonucleotide)m = (deoxyribonucleotide)n+m + AMP + beta-nicotinamide D-nucleotide.. Its function is as follows. DNA ligase that catalyzes the formation of phosphodiester linkages between 5'-phosphoryl and 3'-hydroxyl groups in double-stranded DNA using NAD as a coenzyme and as the energy source for the reaction. It is essential for DNA replication and repair of damaged DNA. This chain is DNA ligase, found in Gloeothece citriformis (strain PCC 7424) (Cyanothece sp. (strain PCC 7424)).